The primary structure comprises 172 residues: Pollen-specific protein-like At4g18596 (172 aa).

Positions 1-27 (MASKAIFFFFVSAVCLSSLAGVAIADA) are cleaved as a signal peptide. Disulfide bonds link cysteine 41–cysteine 112, cysteine 44–cysteine 157, and cysteine 65–cysteine 100. N-linked (GlcNAc...) asparagine glycosylation occurs at asparagine 70.

Belongs to the Ole e I family.

It is found in the secreted. This chain is Pollen-specific protein-like At4g18596, found in Arabidopsis thaliana (Mouse-ear cress).